Reading from the N-terminus, the 603-residue chain is ATP-dependent zinc metalloprotease FtsH (603 aa).

Residues 1 to 2 (MK) are Stromal-facing. A helical membrane pass occupies residues 3–23 (NLWIWSLPLIVLAFIGWQELA). Over 24–101 (NQMPVATSRM…DVDVHAVSNW (78 aa)) the chain is Lumenal. A helical transmembrane segment spans residues 102-122 (INVASNWIIPLIIIGVVIWLL). Over 123–603 (SRSASSNTTG…SQAARLTAVN (481 aa)) the chain is Stromal. An ATP-binding site is contributed by 194–201 (GPPGTGKT). His415 serves as a coordination point for Zn(2+). Residue Glu416 is part of the active site. Zn(2+) contacts are provided by His419 and Asp493.

In the central section; belongs to the AAA ATPase family. It in the C-terminal section; belongs to the peptidase M41 family. As to quaternary structure, homohexamer. Requires Zn(2+) as cofactor.

The protein localises to the plastid. The protein resides in the chloroplast thylakoid membrane. Acts as a processive, ATP-dependent zinc metallopeptidase. The polypeptide is ATP-dependent zinc metalloprotease FtsH (Cyanidioschyzon merolae (strain NIES-3377 / 10D) (Unicellular red alga)).